A 315-amino-acid polypeptide reads, in one-letter code: MKKAVILFNLGGPDSLNAVRPFLFNLFYDRRIINLPNPFRFLLAKFISAKRENTARKIYEEIGGKSPILENTKMQANALELKLNENRNHVHKVFICMRYWRPFADEVIESVKQFDPDEVILLPLYPQYSTTTTLSSIENWQKNAKRYGLKCNTKMIHRYYDNQDFIEAHTNLIAKYYKLARKIGKPRVLFSAHSLPLSIIKKGDPYASQVERSVELIVEKLAINNLDWSICYQSKIGPVKWLEPSTESELLRAKADGVPVVLSPISFVSEHSETLVELDIEYKAIIKDGYYFRVPTLSTDPLFIKCLADLCINLP.

Positions 193 and 273 each coordinate Fe cation.

It belongs to the ferrochelatase family.

Its subcellular location is the cytoplasm. It carries out the reaction heme b + 2 H(+) = protoporphyrin IX + Fe(2+). It functions in the pathway porphyrin-containing compound metabolism; protoheme biosynthesis; protoheme from protoporphyrin-IX: step 1/1. Functionally, catalyzes the ferrous insertion into protoporphyrin IX. The chain is Ferrochelatase from Wolbachia sp. subsp. Drosophila simulans (strain wRi).